Reading from the N-terminus, the 1378-residue chain is DNA-directed RNA polymerase subunit beta (1378 aa).

Belongs to the RNA polymerase beta chain family. In terms of assembly, the RNAP catalytic core consists of 2 alpha, 1 beta, 1 beta' and 1 omega subunit. When a sigma factor is associated with the core the holoenzyme is formed, which can initiate transcription.

The catalysed reaction is RNA(n) + a ribonucleoside 5'-triphosphate = RNA(n+1) + diphosphate. In terms of biological role, DNA-dependent RNA polymerase catalyzes the transcription of DNA into RNA using the four ribonucleoside triphosphates as substrates. The sequence is that of DNA-directed RNA polymerase subunit beta from Mesorhizobium japonicum (strain LMG 29417 / CECT 9101 / MAFF 303099) (Mesorhizobium loti (strain MAFF 303099)).